The sequence spans 227 residues: Phosphoribosylaminoimidazole-succinocarboxamide synthase (227 aa).

It belongs to the SAICAR synthetase family.

It catalyses the reaction 5-amino-1-(5-phospho-D-ribosyl)imidazole-4-carboxylate + L-aspartate + ATP = (2S)-2-[5-amino-1-(5-phospho-beta-D-ribosyl)imidazole-4-carboxamido]succinate + ADP + phosphate + 2 H(+). It participates in purine metabolism; IMP biosynthesis via de novo pathway; 5-amino-1-(5-phospho-D-ribosyl)imidazole-4-carboxamide from 5-amino-1-(5-phospho-D-ribosyl)imidazole-4-carboxylate: step 1/2. The sequence is that of Phosphoribosylaminoimidazole-succinocarboxamide synthase from Clostridium tetani (strain Massachusetts / E88).